A 287-amino-acid polypeptide reads, in one-letter code: Elongation factor Ts (287 aa).

The involved in Mg(2+) ion dislocation from EF-Tu stretch occupies residues 80-83; it reads TDFL.

The protein belongs to the EF-Ts family.

The protein resides in the cytoplasm. Functionally, associates with the EF-Tu.GDP complex and induces the exchange of GDP to GTP. It remains bound to the aminoacyl-tRNA.EF-Tu.GTP complex up to the GTP hydrolysis stage on the ribosome. The protein is Elongation factor Ts of Stutzerimonas stutzeri (strain A1501) (Pseudomonas stutzeri).